The sequence spans 341 residues: L-threonine 3-dehydrogenase (341 aa).

Cys-38 provides a ligand contact to Zn(2+). Active-site charge relay system residues include Thr-40 and His-43. Zn(2+) is bound by residues His-63, Glu-64, Cys-93, Cys-96, Cys-99, and Cys-107. Residues Ile-175, Asp-195, Arg-200, 262–264 (LGI), and 286–287 (IY) each bind NAD(+).

The protein belongs to the zinc-containing alcohol dehydrogenase family. As to quaternary structure, homotetramer. Zn(2+) is required as a cofactor.

The protein resides in the cytoplasm. It carries out the reaction L-threonine + NAD(+) = (2S)-2-amino-3-oxobutanoate + NADH + H(+). It participates in amino-acid degradation; L-threonine degradation via oxydo-reductase pathway; glycine from L-threonine: step 1/2. In terms of biological role, catalyzes the NAD(+)-dependent oxidation of L-threonine to 2-amino-3-ketobutyrate. In Shewanella sp. (strain MR-7), this protein is L-threonine 3-dehydrogenase.